We begin with the raw amino-acid sequence, 231 residues long: Enolase-phosphatase E1 (231 aa).

Positions 206-231 are disordered; sequence LLERPGNAPQPKHSHPKISSFENFNP.

It belongs to the HAD-like hydrolase superfamily. MasA/MtnC family. In terms of assembly, monomer. It depends on Mg(2+) as a cofactor.

It catalyses the reaction 5-methylsulfanyl-2,3-dioxopentyl phosphate + H2O = 1,2-dihydroxy-5-(methylsulfanyl)pent-1-en-3-one + phosphate. The protein operates within amino-acid biosynthesis; L-methionine biosynthesis via salvage pathway; L-methionine from S-methyl-5-thio-alpha-D-ribose 1-phosphate: step 3/6. Its pathway is amino-acid biosynthesis; L-methionine biosynthesis via salvage pathway; L-methionine from S-methyl-5-thio-alpha-D-ribose 1-phosphate: step 4/6. Functionally, bifunctional enzyme that catalyzes the enolization of 2,3-diketo-5-methylthiopentyl-1-phosphate (DK-MTP-1-P) into the intermediate 2-hydroxy-3-keto-5-methylthiopentenyl-1-phosphate (HK-MTPenyl-1-P), which is then dephosphorylated to form the acireductone 1,2-dihydroxy-3-keto-5-methylthiopentene (DHK-MTPene). This Leptospira borgpetersenii serovar Hardjo-bovis (strain JB197) protein is Enolase-phosphatase E1.